The sequence spans 189 residues: MKSIMRSCLGLFVLLTVITGVLYPVFVTGLAKTFFPSKASGSIVYQGDQAIGSELIGQNFTDAKYFWGRPSATGPQPYNGTASGGSNQGPLNPALVDAVKGRIEALQNADSTNQLPIPMDLVTASASGLDPEISPQAAQYQASRVAKARKMSLDNVNQLIAANTQDRQWGIFGEPRVNVLKLNLALDGN.

Residues 11–31 traverse the membrane as a helical segment; sequence LFVLLTVITGVLYPVFVTGLA.

Belongs to the KdpC family. The system is composed of three essential subunits: KdpA, KdpB and KdpC.

It is found in the cell inner membrane. Part of the high-affinity ATP-driven potassium transport (or Kdp) system, which catalyzes the hydrolysis of ATP coupled with the electrogenic transport of potassium into the cytoplasm. This subunit acts as a catalytic chaperone that increases the ATP-binding affinity of the ATP-hydrolyzing subunit KdpB by the formation of a transient KdpB/KdpC/ATP ternary complex. The protein is Potassium-transporting ATPase KdpC subunit of Polynucleobacter asymbioticus (strain DSM 18221 / CIP 109841 / QLW-P1DMWA-1) (Polynucleobacter necessarius subsp. asymbioticus).